The sequence spans 335 residues: Nonaprenyl diphosphate synthase (335 aa).

Positions 57, 60, and 90 each coordinate isopentenyl diphosphate. Positions 97 and 101 each coordinate Mg(2+). The short motif at Asp-97 to Asp-101 is the DDXXD motif element. Arg-107 lines the isopentenyl diphosphate pocket. The DDXXD motif motif lies at Asp-223 to Asp-227.

Belongs to the FPP/GGPP synthase family. Mg(2+) is required as a cofactor.

It catalyses the reaction isopentenyl diphosphate + (2E)-geranyl diphosphate = (2E,6E)-farnesyl diphosphate + diphosphate. It carries out the reaction isopentenyl diphosphate + (2E,6E)-farnesyl diphosphate = (2E,6E,10E)-geranylgeranyl diphosphate + diphosphate. The enzyme catalyses 5 isopentenyl diphosphate + (2E,6E,10E)-geranylgeranyl diphosphate = all-trans-nonaprenyl diphosphate + 5 diphosphate. It participates in isoprenoid biosynthesis; farnesyl diphosphate biosynthesis; farnesyl diphosphate from geranyl diphosphate and isopentenyl diphosphate. Its pathway is isoprenoid biosynthesis; geranylgeranyl diphosphate biosynthesis; geranylgeranyl diphosphate from farnesyl diphosphate and isopentenyl diphosphate: step 1/1. In terms of biological role, catalyzes the sequential condensations of isopentenyl pyrophosphate (IPP) with geranyl diphosphate (GPP) to yield (2E,6E)-farnesyl diphosphate (E,E-FPP), with E,E-FPP to yield geranylgeranyl diphosphate (GGPP) and with GGPP to yield nonaprenyl diphosphate. May also have weak activity with dimethylallyl diphosphate (DMAPP). The protein is Nonaprenyl diphosphate synthase of Mycobacterium tuberculosis (strain ATCC 25618 / H37Rv).